Reading from the N-terminus, the 310-residue chain is Probable GTP 3',8-cyclase (310 aa).

In terms of domain architecture, Radical SAM core spans 5 to 232; that stretch reads RFGRPVTNLR…RRRKYFIPID (228 aa). Arg14 provides a ligand contact to GTP. 2 residues coordinate [4Fe-4S] cluster: Cys21 and Cys25. Tyr27 contributes to the S-adenosyl-L-methionine binding site. Cys28 contributes to the [4Fe-4S] cluster binding site. Lys61 lines the GTP pocket. Gly65 contacts S-adenosyl-L-methionine. Thr90 is a GTP binding site. Position 114 (Ser114) interacts with S-adenosyl-L-methionine. Lys150 serves as a coordination point for GTP. An S-adenosyl-L-methionine-binding site is contributed by Met189. Cys250 and Cys253 together coordinate [4Fe-4S] cluster. 255–257 contributes to the GTP binding site; the sequence is RLR. Cys267 lines the [4Fe-4S] cluster pocket.

This sequence belongs to the radical SAM superfamily. MoaA family. Requires [4Fe-4S] cluster as cofactor.

The catalysed reaction is GTP + AH2 + S-adenosyl-L-methionine = (8S)-3',8-cyclo-7,8-dihydroguanosine 5'-triphosphate + 5'-deoxyadenosine + L-methionine + A + H(+). The protein operates within cofactor biosynthesis; molybdopterin biosynthesis. Catalyzes the cyclization of GTP to (8S)-3',8-cyclo-7,8-dihydroguanosine 5'-triphosphate. This chain is Probable GTP 3',8-cyclase, found in Pyrococcus horikoshii (strain ATCC 700860 / DSM 12428 / JCM 9974 / NBRC 100139 / OT-3).